We begin with the raw amino-acid sequence, 229 residues long: Coiled-coil domain-containing protein 134 (229 aa).

The first 22 residues, 1–22 (MDLLQFLAAFSVLLWPGTEVTG), serve as a signal peptide directing secretion. N148 carries N-linked (GlcNAc...) asparagine glycosylation. The tract at residues 182–229 (FKTDQTEFIPSTDPFQKALREEEKRRKKEERRKEIRKGPRISRSQSEL) is disordered. Residues 196–218 (FQKALREEEKRRKKEERRKEIRK) adopt a coiled-coil conformation. The short motif at 226 to 229 (QSEL) is the Prevents secretion from ER element.

It belongs to the CCDC134 family. In terms of assembly, interacts with TADA2A. Associates with the PCAF complex via TADA2A binding. In terms of processing, O-glycosylated, with additional sialic acid modifications.

The protein resides in the endoplasmic reticulum lumen. It localises to the secreted. The protein localises to the cytoplasm. Its subcellular location is the nucleus. Its function is as follows. Molecular adapter required to prevent protein hyperglycosylation of HSP90B1: during translation, associates with nascent HSP90B1 and the STT3A catalytic component of the OST-A complex and tethers them to a specialized translocon that forms a microenvironment for HSP90B1 folding. In the CCDC134-containing translocon, STT3A associates with the SRT pseudosubstrate motif of HSP90B1, preventing access to facultative glycosylation sites until folding is completed, preventing hyperglycosylation and subsequent degradation of HSP90B1. In extracellular secreted form, promotes proliferation and activation of CD8(+) T-cells, suggesting a cytokine-like function. May inhibit ERK and JNK signaling activity. May suppress cell migration and invasion activity, via its effects on ERK and JNK signaling. May also localize in the nucleus: enhances stability of the PCAF histone acetyltransferase (HAT) complex member TADA2A and thus promotes PCAF-mediated histone acetyltransferase activity. Has a critical role in the regulation of osteogenesis and bone development. In Mus musculus (Mouse), this protein is Coiled-coil domain-containing protein 134 (Ccdc134).